Here is a 276-residue protein sequence, read N- to C-terminus: MQEYDQHNLTKAVIARLADTPNARTKQIMTSLVRHLHDFAREVRLTEAEWKQGIDYLTATGQMCDDKRQEFILLSDVLGLSMLTVAMNQEKPEGCTEPTVFGPFHVEGAPHYAHGADVANGAKGEPCMVYGRVTGVDGRPVAGAVVETWQADADGHYDVQYEGLEVAQGRGVLKSGEDGRFHFRTIVAQAYPIPDDGPVGELLRATGRHPWRPAHLHFMIKAPGYETLVTHVFRRGDKYLDSDAVFGVRTSLIGDWVRQTDGTYRLDFDFVLNPTL.

Residues tyrosine 157, tyrosine 191, histidine 215, and histidine 217 each coordinate Fe cation.

The protein belongs to the intradiol ring-cleavage dioxygenase family. The cofactor is Fe(3+).

The protein operates within aromatic compound metabolism. It participates in xenobiotic degradation. In terms of biological role, involved in the degradation of 2,4,6-trichlorophenol (2,4,6-TCP). May catalyze the oxidation of 6-chlorohydroxyquinol (6-CHQ) to 2-chloromaleylacetate (2-CMA). This chain is 6-chlorohydroxyquinol 1,2-dioxygenase, found in Cupriavidus pinatubonensis (strain JMP 134 / LMG 1197) (Cupriavidus necator (strain JMP 134)).